Reading from the N-terminus, the 177-residue chain is MRVGMGYDVHKLVEGRDLILGGVKVPHTLGLLGHSDADVLLHAIMDALLGAAALGDIGKHFPDTDPAYEGISSLKLLEHVRDLIAKKGYVIENIDATVIAQKPKLRPYIEQMEQNVADTLQIAKEQVNIKATTEEWLGFTGREEGIASQAICSLTGLYEASMQVGGGCSGCGGCQAD.

A divalent metal cation contacts are provided by aspartate 8 and histidine 10. 4-CDP-2-C-methyl-D-erythritol 2-phosphate-binding positions include aspartate 8–histidine 10 and histidine 34–serine 35. Histidine 42 contacts a divalent metal cation. 4-CDP-2-C-methyl-D-erythritol 2-phosphate-binding positions include aspartate 56–glycine 58, phenylalanine 61–aspartate 65, threonine 132–glutamate 135, phenylalanine 139, and arginine 142.

This sequence belongs to the IspF family. Homotrimer. Requires a divalent metal cation as cofactor.

It catalyses the reaction 4-CDP-2-C-methyl-D-erythritol 2-phosphate = 2-C-methyl-D-erythritol 2,4-cyclic diphosphate + CMP. Its pathway is isoprenoid biosynthesis; isopentenyl diphosphate biosynthesis via DXP pathway; isopentenyl diphosphate from 1-deoxy-D-xylulose 5-phosphate: step 4/6. Functionally, involved in the biosynthesis of isopentenyl diphosphate (IPP) and dimethylallyl diphosphate (DMAPP), two major building blocks of isoprenoid compounds. Catalyzes the conversion of 4-diphosphocytidyl-2-C-methyl-D-erythritol 2-phosphate (CDP-ME2P) to 2-C-methyl-D-erythritol 2,4-cyclodiphosphate (ME-CPP) with a corresponding release of cytidine 5-monophosphate (CMP). The polypeptide is 2-C-methyl-D-erythritol 2,4-cyclodiphosphate synthase (Agathobacter rectalis (strain ATCC 33656 / DSM 3377 / JCM 17463 / KCTC 5835 / VPI 0990) (Eubacterium rectale)).